The primary structure comprises 430 residues: Serine hydroxymethyltransferase (430 aa).

120–122 (GHI) lines the (6S)-5,6,7,8-tetrahydrofolate pocket. Lys-226 carries the post-translational modification N6-(pyridoxal phosphate)lysine.

This sequence belongs to the SHMT family. Homodimer. Pyridoxal 5'-phosphate serves as cofactor.

The protein resides in the cytoplasm. The protein operates within amino-acid biosynthesis; glycine biosynthesis; glycine from L-serine: step 1/1. Functionally, catalyzes the reversible interconversion of serine and glycine with a modified folate serving as the one-carbon carrier. Also exhibits a pteridine-independent aldolase activity toward beta-hydroxyamino acids, producing glycine and aldehydes, via a retro-aldol mechanism. This Pyrobaculum calidifontis (strain DSM 21063 / JCM 11548 / VA1) protein is Serine hydroxymethyltransferase.